A 94-amino-acid polypeptide reads, in one-letter code: Co-chaperonin GroES (94 aa).

Belongs to the GroES chaperonin family. As to quaternary structure, heptamer of 7 subunits arranged in a ring. Interacts with the chaperonin GroEL.

It is found in the cytoplasm. Its function is as follows. Together with the chaperonin GroEL, plays an essential role in assisting protein folding. The GroEL-GroES system forms a nano-cage that allows encapsulation of the non-native substrate proteins and provides a physical environment optimized to promote and accelerate protein folding. GroES binds to the apical surface of the GroEL ring, thereby capping the opening of the GroEL channel. The chain is Co-chaperonin GroES from Clostridium botulinum.